The primary structure comprises 229 residues: MAKLTKRMKAIKAGVDSTKQYEINEAITVLKQFTSTKFVESVDVAVNLGIDARKSDQNVRGATVLPHGTGRSVRVAVFTQGANVDAAKAAGADLVGMEDLAEQIKKGEMNFDVVIASPDAMRVVGQLGQILGPRGLMPNPKVGTVTPNVAEAVKNAKSGQIRYRNDKNGIIHTTIGKANFSAEQLKENLQALLAALTKAKPATAKGIFIRKVSVSTTQGAGVAVDQSSL.

This sequence belongs to the universal ribosomal protein uL1 family. In terms of assembly, part of the 50S ribosomal subunit.

Its function is as follows. Binds directly to 23S rRNA. The L1 stalk is quite mobile in the ribosome, and is involved in E site tRNA release. In terms of biological role, protein L1 is also a translational repressor protein, it controls the translation of the L11 operon by binding to its mRNA. The polypeptide is Large ribosomal subunit protein uL1 (Histophilus somni (strain 129Pt) (Haemophilus somnus)).